The primary structure comprises 438 residues: Hydrogenobyrinate a,c-diamide synthase (438 aa).

In terms of domain architecture, GATase cobBQ-type spans 247–438 (RIALAEDAAF…TFFHAIAKGG (192 aa)). Catalysis depends on C329, which acts as the Nucleophile.

This sequence belongs to the CobB/CbiA family. Requires Mg(2+) as cofactor.

The catalysed reaction is hydrogenobyrinate + 2 L-glutamine + 2 ATP + 2 H2O = hydrogenobyrinate a,c-diamide + 2 L-glutamate + 2 ADP + 2 phosphate + 2 H(+). It participates in cofactor biosynthesis; adenosylcobalamin biosynthesis; cob(II)yrinate a,c-diamide from precorrin-2 (aerobic route): step 9/10. Functionally, catalyzes the ATP-dependent amidation of the two carboxylate groups at positions a and c of hydrogenobyrinate, using either L-glutamine or ammonia as the nitrogen source. In Agrobacterium fabrum (strain C58 / ATCC 33970) (Agrobacterium tumefaciens (strain C58)), this protein is Hydrogenobyrinate a,c-diamide synthase.